The sequence spans 241 residues: Ribulose-phosphate 3-epimerase 2 (241 aa).

Residue Ser21 participates in substrate binding. A divalent metal cation is bound by residues His46, Asp48, and His79. The Proton acceptor role is filled by Asp48. Substrate-binding positions include His79, 155-158 (GFGG), 192-194 (DGG), and 214-215 (GS). Asp192 is an a divalent metal cation binding site. Residue Asp192 is the Proton donor of the active site.

This sequence belongs to the ribulose-phosphate 3-epimerase family. A divalent metal cation serves as cofactor.

The enzyme catalyses D-ribulose 5-phosphate = D-xylulose 5-phosphate. It participates in carbohydrate degradation. Functionally, catalyzes the reversible epimerization of D-ribulose 5-phosphate to D-xylulose 5-phosphate. The sequence is that of Ribulose-phosphate 3-epimerase 2 from Cupriavidus necator (strain ATCC 17699 / DSM 428 / KCTC 22496 / NCIMB 10442 / H16 / Stanier 337) (Ralstonia eutropha).